A 209-amino-acid chain; its full sequence is Chalcone isomerase-like protein 2 (209 aa).

Belongs to the chalcone isomerase family. As to quaternary structure, component an active demethylxanthohumol (DMX) biosynthetic metabolon in glandular trichomes (lupulin glands) that encompasses a chalcone synthase (CHS) and a membrane-bound prenyltransferase. Interacts with CHS_H1 and PT1L. In terms of tissue distribution, mostly expressed in glandular trichomes (lupulin glands), and, to a lower extent, in cones, cones bracts, leaves, stems and roots.

Its subcellular location is the cytoplasm. It catalyses the reaction a chalcone = a flavanone.. It functions in the pathway secondary metabolite biosynthesis; flavonoid biosynthesis. Its function is as follows. Involved in the biosynthesis of prenylated phenolics natural products which contribute to the bitter taste of beer and display broad biological activities. Involved in anthocyanin biosynthesis. Polyketide binding proteins (PBP) which promotes the catalytic activities of CHS_H1 and PT1L and triggers demethylxanthohumol (DMX) production. The sequence is that of Chalcone isomerase-like protein 2 from Humulus lupulus (European hop).